A 1214-amino-acid chain; its full sequence is Formin-D (1214 aa).

Residues 10-379 (KKEESPQSID…KMNNGESYLD (370 aa)) enclose the GBD/FH3 domain. Positions 401–448 (SGEKAVLIQKEIEDLKKQKKRDQDKLAEKDKLLTKLAKRMRKMEEAIK) form a coiled coil. In terms of domain architecture, FH1 spans 457 to 544 (NNQIEIESPP…GSGDGIPLPP (88 aa)). 2 stretches are compositionally biased toward polar residues: residues 462–479 (IESPPDSSTSTPQETTPG) and 518–534 (LDTTNQQGSTDASQTEA). Disordered stretches follow at residues 462–490 (IESPPDSSTSTPQETTPGGTKVPLKTSPV), 507–569 (APNG…SRPP), 868–948 (PKSV…PLKD), 1026–1045 (DKSTQRKNEKERKEMEIKKS), 1054–1089 (LKKIGSPSSSNRILASNESSPTSSTSSVVHQHDDED), and 1133–1214 (MNLQ…EGEN). A compositionally biased stretch (pro residues) spans 541–554 (PLPPGAPPPPPPPG). Residues 562–1037 (PQLCSRPPSI…STQRKNEKER (476 aa)) enclose the FH2 domain. Positions 868–877 (PKSVEPKPDD) are enriched in basic and acidic residues. Polar residues predominate over residues 930-940 (QVNTNSTSDSK). The stretch at 1019 to 1056 (EIEKSIKDKSTQRKNEKERKEMEIKKSKLEMIHSKLKK) forms a coiled coil. The span at 1059-1071 (SPSSSNRILASNE) shows a compositional bias: polar residues. One can recognise a DAD domain in the interval 1065–1095 (RILASNESSPTSSTSSVVHQHDDEDEETIKE). Positions 1161-1171 (SSTYSSISSIY) are enriched in low complexity. Acidic residues predominate over residues 1174-1214 (EPLDMSDQEDEDEEEEEDEEEEEEEEEGDDDNDNDEEEGEN). Residues 1176–1207 (LDMSDQEDEDEEEEEDEEEEEEEEEGDDDNDN) adopt a coiled-coil conformation.

The protein belongs to the formin homology family. Diaphanous subfamily. In terms of assembly, interacts (via GBD/FH3 domain) with activated Rho-GTPases.

In terms of biological role, formins play an important role in the nucleation of actin and the formation of linear actin filaments. In Dictyostelium discoideum (Social amoeba), this protein is Formin-D (forD).